Consider the following 526-residue polypeptide: Seipin-2 (526 aa).

Residues 33–77 are disordered; that stretch reads PIRSNSHQPSSLLRRRKSAHRRDLISSDIETEPSSSSDGFDVGEK. Residues 58–70 are compositionally biased toward low complexity; that stretch reads SSDIETEPSSSSD. Helical transmembrane passes span 195-215, 224-243, 258-278, and 483-503; these read SLLT…FDPF, FLMA…MNPF, FGWG…LLVS, and LFVW…LVCC.

The protein belongs to the seipin family. As to expression, expressed in seeds, seedlings, leaves, stems and roots. Not detected in flowers.

The protein resides in the endoplasmic reticulum membrane. Functionally, involved in lipid metabolism and lipid droplet (LD) morphology, number, and size. Supports the formation of small-sized LDs and modulates triacylglycerol accumulation. Induces probably a reorganization of the endoplasmic reticulum into LD-forming domains. In Arabidopsis thaliana (Mouse-ear cress), this protein is Seipin-2.